Consider the following 213-residue polypeptide: Nucleolar protein 12 (213 aa).

Positions 32–95 form a coiled coil; it reads GFHKRKVERK…RLVTAKTESV (64 aa). The interval 117–213 is disordered; that stretch reads ARLLGLPTPE…LTGKARHSGE (97 aa). 2 stretches are compositionally biased toward basic residues: residues 169–181 and 197–213; these read AHSR…KRLR and SKTR…HSGE.

It belongs to the RRP17 family. Interacts with KIAA1191.

The protein localises to the nucleus. The protein resides in the nucleolus. It is found in the cytoplasm. In terms of biological role, multifunctional RNA binding protein that plays a role in RNA metabolism and DNA maintenance. Participates in the resolution of DNA stress and the maintenance of genome integrity by localizing to sites of DNA insults. Also plays a role in proper nucleolar organization by limiting nucleolar size and regulating nucleolar number. Mechanistically, regulates the nucleolar levels of fibrillarin and nucleolin, two key players in pre-rRNA processing and ribosome assembly. This chain is Nucleolar protein 12 (NOL12), found in Bos taurus (Bovine).